A 712-amino-acid polypeptide reads, in one-letter code: BTB/POZ domain-containing protein 18 (712 aa).

The BTB domain maps to C34–Q102. Disordered regions lie at residues V157–L176, R212–V355, and E374–S410. The span at Q218 to S228 shows a compositional bias: polar residues. Positions Q229 to T238 are enriched in basic and acidic residues. A compositionally biased stretch (low complexity) spans S277–S288. A compositionally biased stretch (basic and acidic residues) spans V303 to K313. Positions P396–S410 are enriched in polar residues. Phosphoserine is present on residues S420, S671, and S672. Disordered regions lie at residues K653–E676 and T691–T712. Over residues S702–T712 the composition is skewed to acidic residues.

The protein localises to the nucleus. Its function is as follows. Specifically required during spermatogenesis to promote expression of piRNA precursors. The piRNA metabolic process mediates the repression of transposable elements during meiosis by forming complexes composed of piRNAs and Piwi proteins and governs the methylation and subsequent repression of transposons, which is essential for the germline integrity. Acts by facilitating transcription elongation at piRNA loci during pachytene. The protein is BTB/POZ domain-containing protein 18 of Homo sapiens (Human).